Reading from the N-terminus, the 328-residue chain is Putative glycosyltransferase 41 (328 aa).

The protein belongs to the glycosyltransferase group 1 family. Glycosyltransferase 4 subfamily.

The protein is Putative glycosyltransferase 41 (SIFV0041) of Sulfolobus islandicus filamentous virus (isolate Iceland/Hveragerdi) (SIFV).